We begin with the raw amino-acid sequence, 386 residues long: Alkanesulfonate monooxygenase (386 aa).

This sequence belongs to the SsuD family.

It catalyses the reaction an alkanesulfonate + FMNH2 + O2 = an aldehyde + FMN + sulfite + H2O + 2 H(+). In terms of biological role, catalyzes the desulfonation of aliphatic sulfonates. The protein is Alkanesulfonate monooxygenase of Delftia acidovorans (strain DSM 14801 / SPH-1).